A 213-amino-acid polypeptide reads, in one-letter code: Orotate phosphoribosyltransferase (213 aa).

A 5-phospho-alpha-D-ribose 1-diphosphate-binding site is contributed by Lys-26. 34–35 contacts orotate; it reads FF. Residues 72 to 73, Arg-99, Lys-100, Lys-103, His-105, and 124 to 132 each bind 5-phospho-alpha-D-ribose 1-diphosphate; these read YK and DDVITAGTA. Residues Thr-128 and Arg-156 each coordinate orotate.

It belongs to the purine/pyrimidine phosphoribosyltransferase family. PyrE subfamily. In terms of assembly, homodimer. It depends on Mg(2+) as a cofactor.

The catalysed reaction is orotidine 5'-phosphate + diphosphate = orotate + 5-phospho-alpha-D-ribose 1-diphosphate. It functions in the pathway pyrimidine metabolism; UMP biosynthesis via de novo pathway; UMP from orotate: step 1/2. Functionally, catalyzes the transfer of a ribosyl phosphate group from 5-phosphoribose 1-diphosphate to orotate, leading to the formation of orotidine monophosphate (OMP). The protein is Orotate phosphoribosyltransferase of Pseudomonas putida (strain W619).